The chain runs to 98 residues: Large ribosomal subunit protein bL27 (98 aa).

Positions 1–13 (MKKIWFHLDLQFF) are excised as a propeptide.

It belongs to the bacterial ribosomal protein bL27 family. Post-translationally, the N-terminus is cleaved by ribosomal processing cysteine protease Prp.

The protein is Large ribosomal subunit protein bL27 of Mycoplasmoides gallisepticum (strain R(low / passage 15 / clone 2)) (Mycoplasma gallisepticum).